Here is a 249-residue protein sequence, read N- to C-terminus: MADS-box transcription factor 7 (249 aa).

Positions Met1–Gln61 constitute an MADS-box domain. The K-box domain occupies Leu90–Val180.

May interact with the K-box of MADS6. May interact with MADS13 and MADS18. As to expression, expressed in lodicules, stamens and carpels.

It is found in the nucleus. Functionally, probable transcription factor. May be involved in the control of flowering time. This chain is MADS-box transcription factor 7 (MADS7), found in Oryza sativa subsp. japonica (Rice).